Reading from the N-terminus, the 80-residue chain is uncharacterized protein (80 aa).

Belongs to the BolA/IbaG family.

This is an uncharacterized protein from Buchnera aphidicola subsp. Schizaphis graminum (strain Sg).